Reading from the N-terminus, the 252-residue chain is PF03932 family protein CutC (252 aa).

Belongs to the CutC family.

The protein localises to the cytoplasm. This chain is PF03932 family protein CutC, found in Pectobacterium atrosepticum (strain SCRI 1043 / ATCC BAA-672) (Erwinia carotovora subsp. atroseptica).